The primary structure comprises 236 residues: 1-(5-phosphoribosyl)-5-[(5-phosphoribosylamino)methylideneamino] imidazole-4-carboxamide isomerase (236 aa).

Asp8 (proton acceptor) is an active-site residue. Asp129 (proton donor) is an active-site residue.

It belongs to the HisA/HisF family.

It is found in the cytoplasm. It catalyses the reaction 1-(5-phospho-beta-D-ribosyl)-5-[(5-phospho-beta-D-ribosylamino)methylideneamino]imidazole-4-carboxamide = 5-[(5-phospho-1-deoxy-D-ribulos-1-ylimino)methylamino]-1-(5-phospho-beta-D-ribosyl)imidazole-4-carboxamide. The protein operates within amino-acid biosynthesis; L-histidine biosynthesis; L-histidine from 5-phospho-alpha-D-ribose 1-diphosphate: step 4/9. This is 1-(5-phosphoribosyl)-5-[(5-phosphoribosylamino)methylideneamino] imidazole-4-carboxamide isomerase from Ruminiclostridium cellulolyticum (strain ATCC 35319 / DSM 5812 / JCM 6584 / H10) (Clostridium cellulolyticum).